The sequence spans 739 residues: Adhesion G protein-coupled receptor L4 (739 aa).

The N-terminal stretch at 1–19 is a signal peptide; the sequence is MRLLPLLVGFSTLLNCSYT. Residues 20-57 enclose the EGF-like 1 domain; that stretch reads QNCSKTTCLPNAKCEVHNGVEACFCSQGYSGNGVTICE. Residues 20-481 are Extracellular-facing; the sequence is QNCSKTTCLP…DYNILTRITQ (462 aa). N-linked (GlcNAc...) asparagine glycosylation is present at N21. 9 disulfide bridges follow: C22–C33, C27–C42, C44–C56, C62–C74, C68–C83, C85–C106, C112–C124, C118–C133, and C135–C156. The region spanning 58–107 is the EGF-like 2; calcium-binding domain; the sequence is DIDECSESSVCGDHAVCENVNGGFSCFCREGYQTATGKSQFTPNDGSYCQ. The EGF-like 3; calcium-binding domain occupies 108–157; the sequence is DIDECSESSVCGDHAVCENVNGGFSCFCREGYQTATGKSQFTPNDGSYCQ. Residues N176, N226, N237, N298, N422, N430, and N444 are each glycosylated (N-linked (GlcNAc...) asparagine). One can recognise a GAIN-B domain in the interval 293 to 468; that stretch reads SQFDMNSTDL…AILMSSTSSI (176 aa). Intrachain disulfides connect C418/C450 and C438/C452. The tract at residues 418-468 is GPS; sequence CAFWNYSVDAMNNGSWSTEGCELTHSNDTHTSCRCSHLTHFAILMSSTSSI. The chain crosses the membrane as a helical span at residues 482–502; that stretch reads LGIIISLICLAICIFTFWFFS. Residues 503–513 are Cytoplasmic-facing; it reads EIQSTRTTIHK. A helical transmembrane segment spans residues 514 to 534; sequence NLCCSLFLAELVFLIGININT. The Extracellular segment spans residues 535–548; sequence NKLVCSIIAGLLHY. A helical membrane pass occupies residues 549-569; it reads FFLAAFAWMCIEGIHLYLIVV. At 570-581 the chain is on the cytoplasmic side; sequence GVIYNKGFLHKN. The helical transmembrane segment at 582–602 threads the bilayer; the sequence is FYIFGYLSPAVVVGFSASLGY. Topologically, residues 603 to 622 are extracellular; that stretch reads RYYGTTKVCWLSTENNFIWS. A helical transmembrane segment spans residues 623–643; the sequence is FIGPACLIILVNLLAFGVIIY. Topologically, residues 644 to 667 are cytoplasmic; sequence KVFRHTAGLKPEVSCYENIRSCAR. A helical membrane pass occupies residues 668 to 688; sequence GALALLFLLGTTWIFGVLHVV. At 689 to 695 the chain is on the extracellular side; it reads HASVVTA. A helical membrane pass occupies residues 696–716; the sequence is YLFTVSNAFQGMFIFLFLCVL. Over 717–739 the chain is Cytoplasmic; the sequence is SRKIQEEYYRLFKNVPCCFGCLR.

This sequence belongs to the G-protein coupled receptor 2 family. Adhesion G-protein coupled receptor (ADGR) subfamily. Heterodimer of 2 chains generated by proteolytic processing; the large extracellular N-terminal fragment and the membrane-bound C-terminal fragment predominantly remain associated and non-covalently linked. In terms of processing, glycosylated. Proteolytically cleaved into 2 subunits, an extracellular alpha subunit and a seven-transmembrane subunit.

The protein resides in the cell membrane. Endothelial orphan receptor that acts as a key regulator of angiogenesis. The polypeptide is Adhesion G protein-coupled receptor L4 (Adgrl4) (Mus musculus (Mouse)).